Here is a 117-residue protein sequence, read N- to C-terminus: Protein Turandot F (117 aa).

A signal peptide spans 1–22 (MKTVILFSFLLVLLGYLGAGHA).

It belongs to the Turandot family.

It is found in the secreted. Functionally, a humoral factor that may play a role in stress tolerance. This is Protein Turandot F from Drosophila sechellia (Fruit fly).